Consider the following 245-residue polypeptide: Lactate utilization protein A 1 (245 aa).

This sequence belongs to the LutA/YkgE family.

In terms of biological role, is involved in L-lactate degradation and allows cells to grow with lactate as the sole carbon source. This Bacillus mycoides (strain KBAB4) (Bacillus weihenstephanensis) protein is Lactate utilization protein A 1.